The chain runs to 225 residues: Small ribosomal subunit protein uS3 (225 aa).

A KH type-2 domain is found at 16 to 85; the sequence is VCEYVVKETE…TPQIEVKDVK (70 aa). Residues 202 to 225 are disordered; it reads EVGTESKADQTDVEGRETGNAEES. Residues 205–225 show a composition bias toward basic and acidic residues; the sequence is TESKADQTDVEGRETGNAEES.

The protein belongs to the universal ribosomal protein uS3 family. Part of the 30S ribosomal subunit.

Functionally, binds the lower part of the 30S subunit head. In Thermoplasma acidophilum (strain ATCC 25905 / DSM 1728 / JCM 9062 / NBRC 15155 / AMRC-C165), this protein is Small ribosomal subunit protein uS3.